The following is a 240-amino-acid chain: Phosphatidylserine decarboxylase proenzyme (240 aa).

S209 serves as the catalytic Schiff-base intermediate with substrate; via pyruvic acid. Pyruvic acid (Ser); by autocatalysis is present on S209.

The protein belongs to the phosphatidylserine decarboxylase family. PSD-A subfamily. As to quaternary structure, heterodimer of a large membrane-associated beta subunit and a small pyruvoyl-containing alpha subunit. Pyruvate serves as cofactor. Is synthesized initially as an inactive proenzyme. Formation of the active enzyme involves a self-maturation process in which the active site pyruvoyl group is generated from an internal serine residue via an autocatalytic post-translational modification. Two non-identical subunits are generated from the proenzyme in this reaction, and the pyruvate is formed at the N-terminus of the alpha chain, which is derived from the carboxyl end of the proenzyme. The post-translation cleavage follows an unusual pathway, termed non-hydrolytic serinolysis, in which the side chain hydroxyl group of the serine supplies its oxygen atom to form the C-terminus of the beta chain, while the remainder of the serine residue undergoes an oxidative deamination to produce ammonia and the pyruvoyl prosthetic group on the alpha chain.

The protein resides in the cell membrane. The enzyme catalyses a 1,2-diacyl-sn-glycero-3-phospho-L-serine + H(+) = a 1,2-diacyl-sn-glycero-3-phosphoethanolamine + CO2. It participates in phospholipid metabolism; phosphatidylethanolamine biosynthesis; phosphatidylethanolamine from CDP-diacylglycerol: step 2/2. In terms of biological role, catalyzes the formation of phosphatidylethanolamine (PtdEtn) from phosphatidylserine (PtdSer). The polypeptide is Phosphatidylserine decarboxylase proenzyme (Mycobacterium marinum (strain ATCC BAA-535 / M)).